Consider the following 849-residue polypeptide: Ribosome biogenesis protein ERB1 (849 aa).

The segment at 1–130 (MARNSIKKSP…PKDDDLSRIN (130 aa)) is disordered. Composition is skewed to acidic residues over residues 29–44 (EAEE…DELN) and 51–123 (ASDD…EPKD). Positions 286–405 (RFVPSKHEAK…LRQVPGYQDS (120 aa)) are required for interaction with NOP7. The required for interaction with YTM1 stretch occupies residues 405 to 441 (SVRERFERSLDLYLAPRVRHNKLNIDPDSLIPDLPSP). WD repeat units lie at residues 457–496 (GHTG…QVYK) and 505–545 (NNED…FDIE). Over residues 569-581 (KISSQKEEDNKES) the composition is skewed to basic and acidic residues. The tract at residues 569–619 (KISSQKEEDNKESDNEDEDEEEDNDDDDDDDEPETSSTVEPKKEVAKWYPP) is disordered. A compositionally biased stretch (acidic residues) spans 582-602 (DNEDEDEEEDNDDDDDDDEPE). WD repeat units lie at residues 633–675 (QCRK…SQSP), 678–716 (KSKG…LLKK), 719–758 (PGVR…TPYK), 762–802 (YHEK…DLMT), and 818–849 (INQI…LWTT).

The protein belongs to the WD repeat BOP1/ERB1 family. As to quaternary structure, component of the NOP7 complex, composed of ERB1, NOP7 and YTM1. The complex is held together by ERB1, which interacts with NOP7 via its N-terminal domain and with YTM1 via a high-affinity interaction between the seven-bladed beta-propeller domains of the 2 proteins. The NOP7 complex associates with the 66S pre-ribosome.

Its subcellular location is the nucleus. The protein resides in the nucleolus. The protein localises to the nucleoplasm. Component of the NOP7 complex, which is required for maturation of the 25S and 5.8S ribosomal RNAs and formation of the 60S ribosome. The sequence is that of Ribosome biogenesis protein ERB1 from Candida albicans (strain SC5314 / ATCC MYA-2876) (Yeast).